We begin with the raw amino-acid sequence, 357 residues long: Biotin synthase (357 aa).

A disordered region spans residues 1–27 (MTTAETKPATETGENAGTTGTAGTAAT). Low complexity predominate over residues 9 to 27 (ATETGENAGTTGTAGTAAT). Residues 78 to 303 (DAVEMEGIIS…RQLLRFAGGR (226 aa)) enclose the Radical SAM core domain. Residues C93, C97, and C100 each contribute to the [4Fe-4S] cluster site. Positions 136, 228, and 298 each coordinate [2Fe-2S] cluster.

It belongs to the radical SAM superfamily. Biotin synthase family. In terms of assembly, homodimer. [4Fe-4S] cluster is required as a cofactor. Requires [2Fe-2S] cluster as cofactor.

The catalysed reaction is (4R,5S)-dethiobiotin + (sulfur carrier)-SH + 2 reduced [2Fe-2S]-[ferredoxin] + 2 S-adenosyl-L-methionine = (sulfur carrier)-H + biotin + 2 5'-deoxyadenosine + 2 L-methionine + 2 oxidized [2Fe-2S]-[ferredoxin]. It participates in cofactor biosynthesis; biotin biosynthesis; biotin from 7,8-diaminononanoate: step 2/2. Catalyzes the conversion of dethiobiotin (DTB) to biotin by the insertion of a sulfur atom into dethiobiotin via a radical-based mechanism. The protein is Biotin synthase of Corynebacterium jeikeium (strain K411).